The primary structure comprises 769 residues: Serine/threonine-protein kinase PLK4 (769 aa).

In terms of domain architecture, Protein kinase spans 14–267; it reads YEVQHLLGKG…LEAVLCHPFM (254 aa). ATP contacts are provided by residues 20-28 and Lys43; that span reads LGKGGFATV. The active-site Proton acceptor is the Asp138. One can recognise a Cryptic POLO box 1 (CPB1) domain in the interval 381–498; sequence EDRISVPPLN…ARFVGLVKSK (118 aa). The Cryptic POLO box 2 (CPB2) domain maps to 499–602; that stretch reads TPKVTYFSTL…GRRPITDVQP (104 aa). The POLO box domain maps to 660 to 739; it reads PIKRINVPEI…IPNIQLKLKT (80 aa).

The protein belongs to the protein kinase superfamily. Ser/Thr protein kinase family. CDC5/Polo subfamily. In terms of assembly, homodimer. Interacts with Alms1a. In terms of processing, ubiquitinated by the SCF-slmb ubiquitin ligase complex; leading to its degradation by the proteasome during interphase and regulating centriole number and ensuring the block to centriole reduplication. In terms of tissue distribution, expressed in testis (at protein level).

The protein localises to the cytoplasm. Its subcellular location is the cytoskeleton. It localises to the microtubule organizing center. The protein resides in the centrosome. It is found in the centriole. The enzyme catalyses L-seryl-[protein] + ATP = O-phospho-L-seryl-[protein] + ADP + H(+). The catalysed reaction is L-threonyl-[protein] + ATP = O-phospho-L-threonyl-[protein] + ADP + H(+). Serine/threonine-protein kinase that plays a central role in centriole duplication. Able to trigger procentriole formation on the surface of the mother centriole cylinder, using mother centriole as a platform, leading to the recruitment of centriole biogenesis proteins such as Sas-6. When overexpressed, it is able to induce centrosome amplification through the simultaneous generation of multiple procentrioles adjoining each parental centriole during S phase. Centrosome amplification following overexpression can initiate tumorigenesis, highlighting the importance of centrosome regulation in cancers. The chain is Serine/threonine-protein kinase PLK4 (SAK) from Drosophila melanogaster (Fruit fly).